The primary structure comprises 312 residues: Olfactory receptor 8K3 (312 aa).

The Extracellular portion of the chain corresponds to M1–A25. The N-linked (GlcNAc...) asparagine glycan is linked to N5. The chain crosses the membrane as a helical span at residues P26–I46. Residues V47–R54 are Cytoplasmic-facing. A helical membrane pass occupies residues L55–T75. Residues T76 to T99 lie on the Extracellular side of the membrane. C97 and C189 are oxidised to a cystine. A helical membrane pass occupies residues Q100–Y120. Residues D121 to R139 lie on the Cytoplasmic side of the membrane. The chain crosses the membrane as a helical span at residues V140–T160. The Extracellular segment spans residues I161 to L197. A helical transmembrane segment spans residues I198 to S217. Over Y218–A236 the chain is Cytoplasmic. The chain crosses the membrane as a helical span at residues F237–M257. Over Y258–D270 the chain is Extracellular. The helical transmembrane segment at K271–L291 threads the bilayer. The Cytoplasmic portion of the chain corresponds to R292 to V312.

It belongs to the G-protein coupled receptor 1 family.

It localises to the cell membrane. Odorant receptor. The protein is Olfactory receptor 8K3 (OR8K3) of Homo sapiens (Human).